The primary structure comprises 865 residues: Leucine--tRNA ligase (865 aa).

The 'HIGH' region signature appears at 58–68 (PYPSGNLHMGH). A 'KMSKS' region motif is present at residues 629–633 (KMSKS). Position 632 (K632) interacts with ATP.

It belongs to the class-I aminoacyl-tRNA synthetase family.

It localises to the cytoplasm. It carries out the reaction tRNA(Leu) + L-leucine + ATP = L-leucyl-tRNA(Leu) + AMP + diphosphate. This Synechococcus sp. (strain ATCC 27144 / PCC 6301 / SAUG 1402/1) (Anacystis nidulans) protein is Leucine--tRNA ligase.